Reading from the N-terminus, the 255-residue chain is tRNA (guanine-N(1)-)-methyltransferase (255 aa).

S-adenosyl-L-methionine-binding positions include G112 and 131–136 (LGDYVL).

It belongs to the RNA methyltransferase TrmD family. Homodimer.

The protein resides in the cytoplasm. The enzyme catalyses guanosine(37) in tRNA + S-adenosyl-L-methionine = N(1)-methylguanosine(37) in tRNA + S-adenosyl-L-homocysteine + H(+). In terms of biological role, specifically methylates guanosine-37 in various tRNAs. This chain is tRNA (guanine-N(1)-)-methyltransferase, found in Lacticaseibacillus paracasei (strain ATCC 334 / BCRC 17002 / CCUG 31169 / CIP 107868 / KCTC 3260 / NRRL B-441) (Lactobacillus paracasei).